The following is a 536-amino-acid chain: Pre-mRNA-splicing regulator female-lethal(2)D (536 aa).

The disordered stretch occupies residues 1–91; it reads MSVAAMTMDD…LQQQQQQQQQ (91 aa). Low complexity predominate over residues 28 to 39; the sequence is QNLNILNSSQNS. Over residues 57 to 69 the composition is skewed to basic residues; the sequence is HHHHHPHPHHHHH. Positions 72–91 are enriched in low complexity; the sequence is QQQQQQQQQHLQQQQQQQQQ. The stretch at 254–319 forms a coiled coil; it reads KSFSEEVKKS…KQAIKDEVVA (66 aa). A disordered region spans residues 424–450; sequence APRTLPPKKSKLRGITTRRNSQLEEDH.

This sequence belongs to the fl(2)d family. Component of the WMM complex, a N6-methyltransferase complex composed of a catalytic subcomplex, named MAC, and of an associated subcomplex, named MACOM. The MAC subcomplex is composed of Ime4/Mettl3 and Mettl14. The MACOM subcomplex is composed of fl(2)d, Flacc/Xio, Hakai, vir, and, in some cases of nito. Interacts with vir and msk. Part of a complex containing fl(2)d, Sxl and vir.

The protein resides in the nucleus. Functionally, associated component of the WMM complex, a complex that mediates N6-methyladenosine (m6A) methylation of mRNAs, a modification that plays a role in the efficiency of mRNA splicing and is required for sex determination. Required for sex determination and dosage compensation via Sxl alternative splicing: m6A methylation acts as a key regulator of Sxl pre-mRNA and promotes female-specific alternative splicing of Sxl, which determines female physiognomy. M6A methylation is also required for neuronal functions. Required for proper inclusion of regulated exons in Ubx transcripts, leading to isoforms Ia/b and IIa/b. In Drosophila melanogaster (Fruit fly), this protein is Pre-mRNA-splicing regulator female-lethal(2)D.